We begin with the raw amino-acid sequence, 194 residues long: Glycerol-3-phosphate acyltransferase (194 aa).

A run of 6 helical transmembrane segments spans residues 2–22, 52–72, 80–100, 112–132, 137–157, and 161–181; these read AFFC…GVWI, LGVA…YIAS, DLVI…FISF, VFLF…ILVA, YVSL…FFTH, and YLFA…KTNI.

The protein belongs to the PlsY family. In terms of assembly, probably interacts with PlsX.

The protein localises to the cell inner membrane. It catalyses the reaction an acyl phosphate + sn-glycerol 3-phosphate = a 1-acyl-sn-glycero-3-phosphate + phosphate. The protein operates within lipid metabolism; phospholipid metabolism. In terms of biological role, catalyzes the transfer of an acyl group from acyl-phosphate (acyl-PO(4)) to glycerol-3-phosphate (G3P) to form lysophosphatidic acid (LPA). This enzyme utilizes acyl-phosphate as fatty acyl donor, but not acyl-CoA or acyl-ACP. This Fusobacterium nucleatum subsp. nucleatum (strain ATCC 25586 / DSM 15643 / BCRC 10681 / CIP 101130 / JCM 8532 / KCTC 2640 / LMG 13131 / VPI 4355) protein is Glycerol-3-phosphate acyltransferase.